The sequence spans 335 residues: Fructose-1,6-bisphosphatase class 1 (335 aa).

4 residues coordinate Mg(2+): E92, D115, L117, and D118. Residues 118–121 (DGSS), N211, Y244, 262–264 (YLY), and K274 contribute to the substrate site. A Mg(2+)-binding site is contributed by E280.

Belongs to the FBPase class 1 family. In terms of assembly, homotetramer. Mg(2+) serves as cofactor.

Its subcellular location is the cytoplasm. It catalyses the reaction beta-D-fructose 1,6-bisphosphate + H2O = beta-D-fructose 6-phosphate + phosphate. It participates in carbohydrate biosynthesis; gluconeogenesis. The polypeptide is Fructose-1,6-bisphosphatase class 1 (Teredinibacter turnerae (strain ATCC 39867 / T7901)).